A 361-amino-acid polypeptide reads, in one-letter code: Phospho-N-acetylmuramoyl-pentapeptide-transferase (361 aa).

10 consecutive transmembrane segments (helical) span residues 25–45 (RAVL…PAVI), 73–93 (TMGG…WADL), 97–117 (YVWL…VDDW), 134–154 (YFWQ…TASL), 168–188 (ATFG…IVGA), 200–220 (GLAI…AYVA), 237–257 (AGEL…FLWF), 264–284 (VFMG…VAVV), 289–309 (IILF…MIQV), and 338–358 (QVVV…LSSL).

Belongs to the glycosyltransferase 4 family. MraY subfamily. Mg(2+) serves as cofactor.

It is found in the cell inner membrane. It catalyses the reaction UDP-N-acetyl-alpha-D-muramoyl-L-alanyl-gamma-D-glutamyl-meso-2,6-diaminopimeloyl-D-alanyl-D-alanine + di-trans,octa-cis-undecaprenyl phosphate = di-trans,octa-cis-undecaprenyl diphospho-N-acetyl-alpha-D-muramoyl-L-alanyl-D-glutamyl-meso-2,6-diaminopimeloyl-D-alanyl-D-alanine + UMP. It functions in the pathway cell wall biogenesis; peptidoglycan biosynthesis. Its function is as follows. Catalyzes the initial step of the lipid cycle reactions in the biosynthesis of the cell wall peptidoglycan: transfers peptidoglycan precursor phospho-MurNAc-pentapeptide from UDP-MurNAc-pentapeptide onto the lipid carrier undecaprenyl phosphate, yielding undecaprenyl-pyrophosphoryl-MurNAc-pentapeptide, known as lipid I. The polypeptide is Phospho-N-acetylmuramoyl-pentapeptide-transferase (Thiobacillus denitrificans (strain ATCC 25259 / T1)).